The primary structure comprises 309 residues: Flavonol sulfotransferase-like (309 aa).

3'-phosphoadenylyl sulfate is bound at residue 59–64 (KTGTTW). Histidine 119 (proton acceptor) is an active-site residue. 3'-phosphoadenylyl sulfate contacts are provided by residues arginine 141, serine 149, tyrosine 207, and 274-276 (RKG).

Belongs to the sulfotransferase 1 family.

It is found in the cytoplasm. In Flaveria bidentis (Coastal plain yellowtops), this protein is Flavonol sulfotransferase-like.